We begin with the raw amino-acid sequence, 338 residues long: Solute-binding protein Rfer_1840 (338 aa).

The N-terminal stretch at 1 to 25 (MQRRQLLQSMGGLAASTMPFSLAFA) is a signal peptide. Residues Arg47, Tyr100, Arg175, Ser197, 214–218 (TSSTS), and Glu244 contribute to the malonate site.

The protein belongs to the bacterial solute-binding protein 7 family. In terms of assembly, the complex is comprised of an extracytoplasmic solute-binding protein and a heteromeric permease formed by two transmembrane proteins.

Its subcellular location is the periplasm. Its function is as follows. Solute-binding protein that binds malonate (in vitro). Probably part of a tripartite ATP-independent periplasmic (TRAP) transport system that mediates solute transport into the cytoplasm. In Albidiferax ferrireducens (strain ATCC BAA-621 / DSM 15236 / T118) (Rhodoferax ferrireducens), this protein is Solute-binding protein Rfer_1840.